The sequence spans 87 residues: Large ribosomal subunit protein bL31B (87 aa).

It belongs to the bacterial ribosomal protein bL31 family. Type B subfamily. Part of the 50S ribosomal subunit.

The sequence is that of Large ribosomal subunit protein bL31B from Burkholderia vietnamiensis (strain G4 / LMG 22486) (Burkholderia cepacia (strain R1808)).